A 267-amino-acid polypeptide reads, in one-letter code: L-aspartate dehydrogenase (267 aa).

NAD(+)-binding residues include alanine 124 and asparagine 190. Residue histidine 218 is part of the active site.

The protein belongs to the L-aspartate dehydrogenase family.

The enzyme catalyses L-aspartate + NADP(+) + H2O = oxaloacetate + NH4(+) + NADPH + H(+). It carries out the reaction L-aspartate + NAD(+) + H2O = oxaloacetate + NH4(+) + NADH + H(+). It participates in cofactor biosynthesis; NAD(+) biosynthesis; iminoaspartate from L-aspartate (dehydrogenase route): step 1/1. Its function is as follows. Specifically catalyzes the NAD or NADP-dependent dehydrogenation of L-aspartate to iminoaspartate. This Methanococcus maripaludis (strain C6 / ATCC BAA-1332) protein is L-aspartate dehydrogenase.